The primary structure comprises 465 residues: Poly(A) polymerase I (465 aa).

Active-site residues include aspartate 80, aspartate 82, and aspartate 162. The disordered stretch occupies residues 430–465 (APPEQKGMLNELDDDPAPRRRRSRPRKRAPRREGTV). The segment covering 448–459 (RRRRSRPRKRAP) has biased composition (basic residues).

The protein belongs to the tRNA nucleotidyltransferase/poly(A) polymerase family.

The enzyme catalyses RNA(n) + ATP = RNA(n)-3'-adenine ribonucleotide + diphosphate. In terms of biological role, adds poly(A) tail to the 3' end of many RNAs, which usually targets these RNAs for decay. Plays a significant role in the global control of gene expression, through influencing the rate of transcript degradation, and in the general RNA quality control. This is Poly(A) polymerase I from Salmonella typhi.